The primary structure comprises 308 residues: Transaldolase (308 aa).

Lys-125 serves as the catalytic Schiff-base intermediate with substrate.

Belongs to the transaldolase family. Type 1 subfamily. Homodimer.

Its subcellular location is the cytoplasm. It catalyses the reaction D-sedoheptulose 7-phosphate + D-glyceraldehyde 3-phosphate = D-erythrose 4-phosphate + beta-D-fructose 6-phosphate. Its pathway is carbohydrate degradation; pentose phosphate pathway; D-glyceraldehyde 3-phosphate and beta-D-fructose 6-phosphate from D-ribose 5-phosphate and D-xylulose 5-phosphate (non-oxidative stage): step 2/3. Its function is as follows. Transaldolase is important for the balance of metabolites in the pentose-phosphate pathway. The protein is Transaldolase of Pseudomonas fluorescens (strain Pf0-1).